The primary structure comprises 703 residues: Polyribonucleotide nucleotidyltransferase (703 aa).

Asp-484 and Asp-490 together coordinate Mg(2+). The KH domain occupies Pro-551–Ile-610. In terms of domain architecture, S1 motif spans Gly-620–Lys-688.

The protein belongs to the polyribonucleotide nucleotidyltransferase family. Mg(2+) serves as cofactor.

The protein resides in the cytoplasm. The catalysed reaction is RNA(n+1) + phosphate = RNA(n) + a ribonucleoside 5'-diphosphate. Functionally, involved in mRNA degradation. Catalyzes the phosphorolysis of single-stranded polyribonucleotides processively in the 3'- to 5'-direction. This chain is Polyribonucleotide nucleotidyltransferase, found in Sulfurihydrogenibium sp. (strain YO3AOP1).